Reading from the N-terminus, the 286-residue chain is Aquaporin NIP4-1 (286 aa).

2 consecutive transmembrane segments (helical) span residues 59 to 79 (VMVE…AALM) and 86 to 106 (LTFP…LSWL). Residues 112–114 (NPA) carry the NPA 1 motif. Helical transmembrane passes span 133-153 (LYVA…NAVM), 173-193 (LPFL…ATVA), and 201-221 (TVGG…IGPV). The NPA 2 motif lies at 227-229 (NPA). Residues 241 to 261 (YDGVWIYVVAPVAGMLVGALC) traverse the membrane as a helical segment.

It belongs to the MIP/aquaporin (TC 1.A.8) family. NIP (TC 1.A.8.12) subfamily. In terms of tissue distribution, expressed in leaves and at lower levels in roots.

The protein resides in the membrane. Functionally, aquaporins facilitate the transport of water and small neutral solutes across cell membranes. The sequence is that of Aquaporin NIP4-1 (NIP4-1) from Oryza sativa subsp. japonica (Rice).